Reading from the N-terminus, the 80-residue chain is Exodeoxyribonuclease 7 small subunit (80 aa).

It belongs to the XseB family. As to quaternary structure, heterooligomer composed of large and small subunits.

It localises to the cytoplasm. The catalysed reaction is Exonucleolytic cleavage in either 5'- to 3'- or 3'- to 5'-direction to yield nucleoside 5'-phosphates.. Functionally, bidirectionally degrades single-stranded DNA into large acid-insoluble oligonucleotides, which are then degraded further into small acid-soluble oligonucleotides. The sequence is that of Exodeoxyribonuclease 7 small subunit from Streptomyces avermitilis (strain ATCC 31267 / DSM 46492 / JCM 5070 / NBRC 14893 / NCIMB 12804 / NRRL 8165 / MA-4680).